The sequence spans 347 residues: MESFASLAGGGSSSTTARLPELIPPENPDRISPPPLLYQLLAGSASSARHGHGHHHGGGGGAAAAAVQGLQVSPAGAEAAMKAEIMSHPQYSALLAAYLGCKKVGAPPDVLTKLTAVPAAQQQLDAADGHPRRRHEPRRDDDVPDHQLDQFMHADEVQGGAGAADPGSRGVLQLDSIADSNCEGTGSSEEEQDTSCPEAEEIDPSDKQLKHQLLMKYGGSLGDLRQAFSKRTKKGKLPKEARLKLLHWWELHYDKWPYPSEVEKMTLAQTTGLDQKQISNWFINQRKRHWKPTPVAGMTFPTVEAAGGGFRHSGHDGGLAAAAAAAALPLYMGSWPFVVDGMYRLGS.

A compositionally biased stretch (low complexity) spans 1–17 (MESFASLAGGGSSSTTA). Disordered regions lie at residues 1-36 (MESFASLAGGGSSSTTARLPELIPPENPDRISPPPL), 122-145 (QQLDAADGHPRRRHEPRRDDDVPD), and 179-206 (DSNCEGTGSSEEEQDTSCPEAEEIDPSD). Pro residues predominate over residues 22–36 (LIPPENPDRISPPPL). Residues 188–203 (SEEEQDTSCPEAEEID) show a composition bias toward acidic residues. In terms of domain architecture, ELK spans 208-228 (QLKHQLLMKYGGSLGDLRQAF). A DNA-binding region (homeobox; TALE-type) is located at residues 229-293 (SKRTKKGKLP…NQRKRHWKPT (65 aa)).

This sequence belongs to the TALE/KNOX homeobox family.

The protein resides in the nucleus. The polypeptide is Homeobox protein knotted-1-like 9 (Oryza sativa subsp. japonica (Rice)).